The following is a 1124-amino-acid chain: Transient-receptor-potential-like protein (1124 aa).

Positions 1 to 24 (MGRKKKLPTGVSSGVSHASSAPKS) are disordered. Topologically, residues 1–340 (MGRKKKLPTG…GFRRKSIVDK (340 aa)) are cytoplasmic. The segment covering 10-21 (GVSSGVSHASSA) has biased composition (low complexity). ANK repeat units lie at residues 40–69 (LEEKKFLLAVERGDMPNVRRILQKALRHQH), 78–107 (LGRRALTLAIDNENLEMVELLVVMGVETKD), and 152–181 (PDITPLMLAAHKNNFEILRILLDRGAAVPV). Residues 341 to 361 (VICIAQVAVLFPLYCLIYMCA) traverse the membrane as a helical segment. At 362 to 373 (PNCRTGQLMRKP) the chain is on the extracellular side. A helical transmembrane segment spans residues 374–394 (FMKFLIHASSYLFFLFILILV). Residues 395-431 (SQRADDDFVRIFGTTRMKKELAEQELRQRGQTPSKLE) lie on the Cytoplasmic side of the membrane. Residues 432 to 452 (LIVVMYVIGFVWEEVQEIFAV) traverse the membrane as a helical segment. Over 453–512 (GMKSYLRNMWNFIDFLRNSLYVSVMCLRAFAYIQQATEIARDPQMAYIPREKWHDFDPQL) the chain is Extracellular. A helical transmembrane segment spans residues 513–533 (IAEGLFAAANVFSALKLVHLF). The Cytoplasmic portion of the chain corresponds to 534-548 (SINPHLGPLQISLGR). The helical transmembrane segment at 549 to 569 (MVIDIVKFFFIYTLVLFAFAC) threads the bilayer. Topologically, residues 570-645 (GLNQLLWYFA…GIKSYTRFWG (76 aa)) are extracellular. The helical transmembrane segment at 646–666 (LLMFGSYSVINVIVLLNLLIA) threads the bilayer. At 667–1124 (MMSNSYAMID…TSPQRPKHRN (458 aa)) the chain is on the cytoplasmic side. 2 calmodulin-binding regions span residues 710–728 (SVKWVIRIFRKSSKTIDRQ) and 853–895 (IPSK…SQIG). Disordered regions lie at residues 978 to 1013 (RAMAANNTRSLTAPELKISRKSSPAPTPTPTPGVSH) and 1031 to 1124 (LIAN…KHRN). The span at 1035-1063 (SAPSAPTAPPKKSAPTAPTPTYKPTTHAP) shows a compositional bias: low complexity. Basic and acidic residues-rich tracts occupy residues 1069-1081 (GNRENTRASDGVR) and 1090-1106 (HVVDLDEKGGHLGRDNV). The span at 1107 to 1118 (SDISSIASTSPQ) shows a compositional bias: polar residues.

It belongs to the transient receptor (TC 1.A.4) family. STrpC subfamily. In terms of assembly, forms heteromultimers with Trpgamma and, to a lower extent, with trp. Interacts with Fkbp59 in vivo and is found in the inaD signaling complex. As to expression, expressed predominantly in the rhabdomeres of photoreceptor cells.

The protein localises to the membrane. It is found in the cell projection. Its subcellular location is the rhabdomere membrane. A light-sensitive calcium channel that is required for inositide-mediated Ca(2+) entry in the retina during phospholipase C (PLC)-mediated phototransduction. Required for vision in the dark and in dim light. Binds calmodulin. Trp and trpl act together in the light response, although it is unclear whether as heteromultimers or distinct units. Also forms a functional cation channel with Trpgamma. Activated by fatty acids, metabolic stress, inositols and GTP-binding proteins. The sequence is that of Transient-receptor-potential-like protein (trpl) from Drosophila melanogaster (Fruit fly).